Reading from the N-terminus, the 579-residue chain is uncharacterized protein (579 aa).

The tract at residues 1–100 is disordered; sequence MSGRRRNHPG…APPCGPYPGE (100 aa). Residues 80–90 are compositionally biased toward polar residues; it reads GQQQSEPQHNS. The next 11 membrane-spanning stretches (helical) occupy residues 148–168, 175–195, 206–226, 228–248, 279–299, 303–323, 378–398, 407–427, 448–468, 504–524, and 526–546; these read FAVD…AAAS, VALY…LIGP, VALA…IMNY, GATG…MMVL, VFGL…VEFV, LFKL…GALL, LWGN…PAFV, WVQL…NFAG, IAVT…MTTI, SEST…MVYT, and LWVG…QTVV.

The protein to M.tuberculosis Rv0876c.

The protein localises to the cell membrane. This is an uncharacterized protein from Mycobacterium leprae (strain TN).